Consider the following 310-residue polypeptide: Vomeronasal type-1 receptor 93 (310 aa).

The Extracellular segment spans residues 1-20; that stretch reads MNKDNTLHVDTIMKITMFSE. Residues 21 to 41 form a helical membrane-spanning segment; it reads VSVGILANSILFFAHLCMLLG. Over 42-59 the chain is Cytoplasmic; sequence ENKPKPIHLYIASLSLTQ. The helical transmembrane segment at 60–80 threads the bilayer; sequence LMLLITMGLIAADMFISQGIW. The Extracellular segment spans residues 81-93; it reads DSTSCQSLIYLHR. Residues C85 and C172 are joined by a disulfide bond. Residues 94-114 form a helical membrane-spanning segment; it reads LSRGFTLSAACLLNVFWMITL. Residues 115–134 are Cytoplasmic-facing; sequence SSKKSRLTKFKHNSPHHISG. The helical transmembrane segment at 135–155 threads the bilayer; the sequence is AFLLLCVLYMCFSSHLILSII. Topologically, residues 156–193 are extracellular; that stretch reads ATPNLTSDNFMYVTKSCSFLPMCYSRTSMFSTTIAVRE. The N-linked (GlcNAc...) asparagine glycan is linked to N159. The helical transmembrane segment at 194 to 214 threads the bilayer; it reads AFFIGLMALSSGYLVAFLWRH. Residues 215 to 238 lie on the Cytoplasmic side of the membrane; that stretch reads RKQAQHLHSTGLSSKASPEQRATE. The chain crosses the membrane as a helical span at residues 239–259; it reads TILLLMSFFVVLYILENVVFY. Over 260–269 the chain is Extracellular; that stretch reads SRMKFKDGST. A helical membrane pass occupies residues 270 to 290; sequence FYCVQIIVSHSYATVSSFVFI. Topologically, residues 291–310 are cytoplasmic; that stretch reads FTEKRMTKILRSVCTRIINI.

It belongs to the G-protein coupled receptor 1 family. Expressed in 1-4% of neurons of the vomeronasal organ. Only one pheromone receptor gene may be expressed in a particular neuron. Not expressed in the main olfactory epithelium.

The protein localises to the cell membrane. Its function is as follows. Putative pheromone receptor implicated in the regulation of social as well as reproductive behavior. The protein is Vomeronasal type-1 receptor 93 (Vom1r93) of Rattus norvegicus (Rat).